Reading from the N-terminus, the 263-residue chain is uncharacterized protein (263 aa).

It belongs to the AtsA family.

Its subcellular location is the plastid. The protein resides in the chloroplast. This is an uncharacterized protein from Porphyra purpurea (Red seaweed).